Reading from the N-terminus, the 363-residue chain is Cytoskeleton protein RodZ (363 aa).

Residues 1 to 111 are Cytoplasmic-facing; that stretch reads MNTEASQDQT…LGKKHKKRDG (111 aa). One can recognise an HTH cro/C1-type domain in the interval 19 to 79; the sequence is LRQARESLGL…KLVHLPEDEL (61 aa). A DNA-binding region (H-T-H motif) is located at residues 30–49; sequence QQTVAERLCLKVSTIRDIEE. Residues 112 to 132 form a helical; Signal-anchor for type II membrane protein membrane-spanning segment; that stretch reads WLMSFTWLIVLVVLGLTGAWW. Over 133 to 363 the chain is Periplasmic; it reads WQNHQAQQAE…RVARLTVGVE (231 aa). The interval 151–277 is disordered; it reads SAQLSQNGGQ…PLPTADAGVS (127 aa). A compositionally biased stretch (polar residues) spans 188-199; that stretch reads PLTNHSVSAITN. Low complexity predominate over residues 200–225; it reads SAPTTSSVPTTSSATTSSVPTTSSVP. Residues 226–243 show a composition bias toward polar residues; sequence KINSTEPVDTANTNTTMH. The segment covering 247–259 has biased composition (low complexity); that stretch reads AASAAVSPSQVPQ.

It belongs to the RodZ family.

It is found in the cell inner membrane. In terms of biological role, cytoskeletal protein that is involved in cell-shape control through regulation of the length of the long axis. The protein is Cytoskeleton protein RodZ of Yersinia pseudotuberculosis serotype O:1b (strain IP 31758).